A 940-amino-acid chain; its full sequence is Isoleucine--tRNA ligase (940 aa).

The 'HIGH' region motif lies at 58 to 68 (PYANGSIHIGH). Residue Glu-564 coordinates L-isoleucyl-5'-AMP. The 'KMSKS' region signature appears at 605-609 (KMSKS). Lys-608 provides a ligand contact to ATP. Positions 903, 906, 923, and 926 each coordinate Zn(2+).

The protein belongs to the class-I aminoacyl-tRNA synthetase family. IleS type 1 subfamily. In terms of assembly, monomer. It depends on Zn(2+) as a cofactor.

The protein localises to the cytoplasm. It carries out the reaction tRNA(Ile) + L-isoleucine + ATP = L-isoleucyl-tRNA(Ile) + AMP + diphosphate. Functionally, catalyzes the attachment of isoleucine to tRNA(Ile). As IleRS can inadvertently accommodate and process structurally similar amino acids such as valine, to avoid such errors it has two additional distinct tRNA(Ile)-dependent editing activities. One activity is designated as 'pretransfer' editing and involves the hydrolysis of activated Val-AMP. The other activity is designated 'posttransfer' editing and involves deacylation of mischarged Val-tRNA(Ile). This Shewanella baltica (strain OS185) protein is Isoleucine--tRNA ligase.